The sequence spans 371 residues: Aldose sugar dehydrogenase YliI (371 aa).

The signal sequence occupies residues 1-20; that stretch reads MHRQSFFLVPLICLSSALWA. Q82 serves as a coordination point for pyrroloquinoline quinone. Residue H147 is the Proton acceptor of the active site. The PQQ stretch occupies residues 214–215; it reads RN. Ca(2+) is bound by residues E240 and Y250. Y261 provides a ligand contact to pyrroloquinoline quinone. PQQ stretches follow at residues 312–314 and 341–343; these read ALK and RIR.

This sequence belongs to the PQQ oxidoreductase GdhB family. In terms of assembly, monomer. The cofactor is Ca(2+). It depends on pyrroloquinoline quinone as a cofactor.

It localises to the cell outer membrane. Functionally, aldose sugar dehydrogenase with broad substrate specificity. The physiological substrate is unknown. Can oxidize glucose to gluconolactone. Can also utilize D-arabinose, L-arabinose and 2-deoxy-glucose. Has higher activity towards oligomeric sugars, such as maltose, maltotriose or cellobiose. It may function to input sugar-derived electrons into the respiratory network. The polypeptide is Aldose sugar dehydrogenase YliI (yliI) (Escherichia coli (strain K12)).